A 1004-amino-acid polypeptide reads, in one-letter code: NADH:acrylate oxidoreductase (1004 aa).

Thr-455 is modified (FMN phosphoryl threonine). FAD is bound by residues Ala-508, Glu-527, Asn-535, Thr-536, Gly-540, Gly-541, and Asp-775. Arg-834 acts as the Proton donor in catalysis. FAD-binding residues include His-941, Glu-970, Ala-985, and Leu-986.

The protein belongs to the FAD-dependent oxidoreductase 2 family. FRD/SDH subfamily. FAD is required as a cofactor. It depends on FMN as a cofactor. Is flavinylated on Thr-455 by ApbE, encoded in a neighboring gene. Flavinylation is essential for catalytic activity.

It catalyses the reaction acrylate + NADH + H(+) = propanoate + NAD(+). Catalyzes the NADH-dependent reduction of acrylate to propanoate. The principal role of ARD in Vibrio seems to be the energy-saving detoxification of acrylate coming from the environment. May also use acrylate as the terminal electron acceptor for NADH regeneration at oxygen deficiency. NADPH cannot replace NADH as the electron donor. Is also able to reduce methacrylate in vitro, but with a much lower efficiency. The protein is NADH:acrylate oxidoreductase of Vibrio harveyi (Beneckea harveyi).